Consider the following 368-residue polypeptide: tRNA(Met) cytidine acetate ligase (368 aa).

Residues 7-20 (IAEF…HKYL), Gly96, Asn152, and Arg175 each bind ATP.

This sequence belongs to the TmcAL family.

It localises to the cytoplasm. It carries out the reaction cytidine(34) in elongator tRNA(Met) + acetate + ATP = N(4)-acetylcytidine(34) in elongator tRNA(Met) + AMP + diphosphate. Functionally, catalyzes the formation of N(4)-acetylcytidine (ac(4)C) at the wobble position of elongator tRNA(Met), using acetate and ATP as substrates. First activates an acetate ion to form acetyladenylate (Ac-AMP) and then transfers the acetyl group to tRNA to form ac(4)C34. This is tRNA(Met) cytidine acetate ligase from Streptococcus pyogenes serotype M28 (strain MGAS6180).